A 614-amino-acid chain; its full sequence is Bifunctional enzyme CysN/CysC (614 aa).

The sulfate adenylyltransferase stretch occupies residues 1–441; that stretch reads MTTLLRLATA…SLVTAQDRPP (441 aa). In terms of domain architecture, tr-type G spans 2 to 217; that stretch reads TTLLRLATAG…DVYIAGDRNM (216 aa). Positions 11–18 are G1; that stretch reads GSVDDGKS. 11-18 provides a ligand contact to GTP; it reads GSVDDGKS. Residues 67–71 form a G2 region; the sequence is GITID. The segment at 88–91 is G3; it reads DTPG. Residues 88–92 and 143–146 contribute to the GTP site; these read DTPGH and NKMD. The interval 143 to 146 is G4; the sequence is NKMD. Residues 180-182 are G5; that stretch reads SAL. The segment at 442–614 is adenylyl-sulfate kinase; the sequence is RGKTVWFTGL…EVIDLLESSS (173 aa). 450–457 is an ATP binding site; the sequence is GLSGSGKS. S524 acts as the Phosphoserine intermediate in catalysis. Residues 578–597 are disordered; that stretch reads GIDSPYQRPKNPDLRLTPDR. A compositionally biased stretch (basic and acidic residues) spans 587-597; that stretch reads KNPDLRLTPDR.

This sequence in the C-terminal section; belongs to the APS kinase family. It in the N-terminal section; belongs to the TRAFAC class translation factor GTPase superfamily. Classic translation factor GTPase family. CysN/NodQ subfamily. In terms of assembly, heterodimer composed of CysD, the smaller subunit, and CysNC.

The catalysed reaction is sulfate + ATP + H(+) = adenosine 5'-phosphosulfate + diphosphate. It carries out the reaction adenosine 5'-phosphosulfate + ATP = 3'-phosphoadenylyl sulfate + ADP + H(+). The protein operates within sulfur metabolism; hydrogen sulfide biosynthesis; sulfite from sulfate: step 1/3. Its pathway is sulfur metabolism; hydrogen sulfide biosynthesis; sulfite from sulfate: step 2/3. Its function is as follows. With CysD forms the ATP sulfurylase (ATPS) that catalyzes the adenylation of sulfate producing adenosine 5'-phosphosulfate (APS) and diphosphate, the first enzymatic step in sulfur assimilation pathway. APS synthesis involves the formation of a high-energy phosphoric-sulfuric acid anhydride bond driven by GTP hydrolysis by CysN coupled to ATP hydrolysis by CysD. In terms of biological role, APS kinase catalyzes the synthesis of activated sulfate. This is Bifunctional enzyme CysN/CysC (cysNC) from Mycobacterium tuberculosis (strain CDC 1551 / Oshkosh).